Reading from the N-terminus, the 719-residue chain is Polyribonucleotide nucleotidyltransferase (719 aa).

Mg(2+) is bound by residues Asp495 and Asp501. A KH domain is found at 562–621 (PRRLSFRIDPELIGTVIGPGGRTIKGITERTNTKIDIEDTGIVTVASHDGAAAEEAQKII). Residues 631–699 (GEYFDGKVTR…NRGRINLTLR (69 aa)) form the S1 motif domain. The tract at residues 699–719 (RGVPQDGSDPQPTVILPIGES) is disordered.

The protein belongs to the polyribonucleotide nucleotidyltransferase family. Mg(2+) is required as a cofactor.

The protein resides in the cytoplasm. It catalyses the reaction RNA(n+1) + phosphate = RNA(n) + a ribonucleoside 5'-diphosphate. Involved in mRNA degradation. Catalyzes the phosphorolysis of single-stranded polyribonucleotides processively in the 3'- to 5'-direction. This chain is Polyribonucleotide nucleotidyltransferase, found in Synechococcus sp. (strain RCC307).